The sequence spans 33 residues: Alpha-amanitin proprotein 2 (33 aa).

Positions M1–P10 are excised as a propeptide. I11 bears the (3R,4R)-4,5-dihydroxyisoleucine; in form alpha-amanitin mark. Position 11 is a (3R,4S)-4-hydroxyisoleucine; in form gamma-amanitin (I11). The segment at residues I11–P18 is a cross-link (cyclopeptide (Ile-Pro)). The 2'-cysteinyl-6'-hydroxytryptophan sulfoxide (Trp-Cys) cross-link spans W12–C16. Position 18 is a 4-hydroxyproline (P18). Positions C19–A33 are excised as a propeptide.

It belongs to the MSDIN fungal toxin family. Processed by the macrocyclase-peptidase enzyme POPB to yield a toxic cyclic octapeptide. POPB first removes 10 residues from the N-terminus. Conformational trapping of the remaining peptide forces the enzyme to release this intermediate rather than proceed to macrocyclization. The enzyme rebinds the remaining peptide in a different conformation and catalyzes macrocyclization of the N-terminal 8 residues. Expressed in basidiocarps.

Functionally, major toxin belonging to the bicyclic octapeptides amatoxins that acts by binding non-competitively to RNA polymerase II and greatly slowing the elongation of transcripts from target promoters. The protein is Alpha-amanitin proprotein 2 of Amanita exitialis (Guangzhou destroying angel).